The chain runs to 2280 residues: Metacaspase-3 (2280 aa).

Disordered stretches follow at residues I56–D83, Y202–G284, Y791–N819, D931–K954, S994–E1015, K1278–I1306, and K1469–A1500. Over residues N63–D83 the composition is skewed to basic and acidic residues. Composition is skewed to polar residues over residues E205–R219 and D228–G278. Low complexity-rich tracts occupy residues N793–N819 and D931–S941. Composition is skewed to low complexity over residues K1278–N1303 and A1482–A1500.

Belongs to the peptidase C14B family.

Its function is as follows. Protease that cleaves specifically after arginine or lysine residues. In Plasmodium falciparum (isolate 3D7), this protein is Metacaspase-3.